Here is a 457-residue protein sequence, read N- to C-terminus: ADP-dependent glucose/glucosamine kinase (457 aa).

The 453-residue stretch at 5–457 (TNWESLYEKA…SAFVSEFSLH (453 aa)) folds into the ADPK domain. D-glucose contacts are provided by residues aspartate 37, glutamate 91, 115–116 (GQ), and histidine 179. Residue glutamate 269 coordinates Mg(2+). Position 295 (asparagine 295) interacts with ADP. Glutamate 298 lines the Mg(2+) pocket. ADP contacts are provided by residues 345 to 346 (HT), valine 432, and glycine 442. Aspartate 443 contributes to the D-glucose binding site. Mg(2+) is bound at residue aspartate 443. Catalysis depends on aspartate 443, which acts as the Proton acceptor.

Belongs to the ADP-dependent glucokinase family. Mg(2+) serves as cofactor.

The protein localises to the cytoplasm. It catalyses the reaction D-glucose + ADP = D-glucose 6-phosphate + AMP + H(+). The enzyme catalyses D-glucosamine + ADP = D-glucosamine 6-phosphate + AMP + H(+). It participates in carbohydrate degradation; glycolysis. Inhibited by 8-bromoadenosine phosphate (8-Br-AMP). Functionally, catalyzes the ADP-dependent phosphorylation of D-glucose to D-glucose 6-phosphate and glucosamine to glucosamine 6-phosphate. This Pyrococcus horikoshii (strain ATCC 700860 / DSM 12428 / JCM 9974 / NBRC 100139 / OT-3) protein is ADP-dependent glucose/glucosamine kinase.